A 1961-amino-acid polypeptide reads, in one-letter code: Myosin-9 (1961 aa).

Residue Ala-2 is modified to N-acetylalanine. Residues 2-838 (AQQAADKYLY…RLFTKVKPLL (837 aa)) are mediates interaction with LIMCH1. Lys-8 is subject to N6-acetyllysine. Tyr-11 carries the post-translational modification Phosphotyrosine. Residues 27–77 (GAKKLVWVPSTKNGFEPASLKEEVGEEAIVELVENGKKVKVNKDDIQKMNP) enclose the Myosin N-terminal SH3-like domain. The region spanning 81–776 (SKVEDMAELT…VLAHLEEERD (696 aa)) is the Myosin motor domain. The residue at position 102 (Lys-102) is an N6-acetyllysine. ATP is bound at residue 174 to 181 (GESGAGKT). 3 positions are modified to N6-acetyllysine: Lys-299, Lys-435, and Lys-613. At Ser-628 the chain carries Phosphoserine. The interval 654 to 676 (LAKLMATLRNTNPNFVCCIIPNH) is actin-binding. A Phosphotyrosine modification is found at Tyr-754. In terms of domain architecture, IQ spans 779–808 (ITDVIIGFQACCRGYLARKAFAKRQQQLTA). A coiled-coil region spans residues 841-1927 (IRHEDELLAK…LKNKLRRGDM (1087 aa)). Lys-850 is modified (N6-succinyllysine). 3 positions are modified to N6-acetyllysine: Lys-860, Lys-975, and Lys-1024. Residues 1035–1055 (RLRREEKQRQELEKTRRKLEG) are compositionally biased toward basic and acidic residues. The tract at residues 1035 to 1057 (RLRREEKQRQELEKTRRKLEGDS) is disordered. Ser-1114 is modified (phosphoserine). Residues Lys-1234 and Lys-1249 each carry the N6-acetyllysine modification. Residues 1331–1353 (LKQMEDEKNSFREQLEEEEEEAK) are disordered. Positions 1332 to 1344 (KQMEDEKNSFREQ) are enriched in basic and acidic residues. 6 positions are modified to N6-acetyllysine: Lys-1358, Lys-1393, Lys-1405, Lys-1411, Lys-1460, and Lys-1639. The residue at position 1670 (Lys-1670) is an N6-succinyllysine. Ser-1715 bears the Phosphoserine mark. An N6-acetyllysine mark is found at Lys-1794, Lys-1803, and Lys-1846. Residues 1878-1910 (RQLEEAEEEAQRANASRRKLQRELEDATETADA) form a disordered region. An Omega-N-methylarginine modification is found at Arg-1924. The interval 1938–1961 (KGTGDCSDEEVDGKADGADAKATE) is disordered. Residue Ser-1944 is modified to Phosphoserine. Basic and acidic residues predominate over residues 1949–1961 (DGKADGADAKATE).

The protein belongs to the TRAFAC class myosin-kinesin ATPase superfamily. Myosin family. In terms of assembly, myosin is a hexameric protein that consists of 2 heavy chain subunits (MHC), 2 alkali light chain subunits (MLC) and 2 regulatory light chain subunits (MLC-2). Interacts with RASIP1. Interacts with DDR1. Interacts with PDLIM2. Interacts with SVIL. Interacts with HTRA3. Interacts with Myo7a. Interacts with CFAP95. Interacts with LIMCH1; independently of the integration of MYH9 into the myosin complex. Interacts with RAB3A. Interacts with ZBED4. Interacts with S100A4; this interaction increases cell motility. Post-translationally, ISGylated. Ubiquitination.

Its subcellular location is the cytoplasm. The protein resides in the cytoskeleton. It is found in the cell cortex. The protein localises to the cytoplasmic vesicle. It localises to the secretory vesicle. Its subcellular location is the cortical granule. Functionally, cellular myosin that appears to play a role in cytokinesis, cell shape, and specialized functions such as secretion and capping. Required for cortical actin clearance prior to oocyte exocytosis. Promotes cell motility in conjunction with S100A4. During cell spreading, plays an important role in cytoskeleton reorganization, focal contact formation (in the margins but not the central part of spreading cells), and lamellipodial retraction; this function is mechanically antagonized by MYH10. In Rattus norvegicus (Rat), this protein is Myosin-9 (Myh9).